Consider the following 56-residue polypeptide: Small ribosomal subunit protein uS14 (56 aa).

Residues cysteine 21, cysteine 24, cysteine 39, and cysteine 42 each coordinate Zn(2+).

It belongs to the universal ribosomal protein uS14 family. Component of the small ribosomal subunit. Mature ribosomes consist of a small (40S) and a large (60S) subunit. The 40S subunit contains about 32 different proteins and 1 molecule of RNA (18S). The 60S subunit contains 45 different proteins and 3 molecules of RNA (25S, 5.8S and 5S). The cofactor is Zn(2+).

It localises to the cytoplasm. Component of the ribosome, a large ribonucleoprotein complex responsible for the synthesis of proteins in the cell. The small ribosomal subunit (SSU) binds messenger RNAs (mRNAs) and translates the encoded message by selecting cognate aminoacyl-transfer RNA (tRNA) molecules. The large subunit (LSU) contains the ribosomal catalytic site termed the peptidyl transferase center (PTC), which catalyzes the formation of peptide bonds, thereby polymerizing the amino acids delivered by tRNAs into a polypeptide chain. The nascent polypeptides leave the ribosome through a tunnel in the LSU and interact with protein factors that function in enzymatic processing, targeting, and the membrane insertion of nascent chains at the exit of the ribosomal tunnel. This is Small ribosomal subunit protein uS14 from Candida albicans (strain SC5314 / ATCC MYA-2876) (Yeast).